We begin with the raw amino-acid sequence, 639 residues long: Sec1 family domain-containing protein 1 (639 aa).

Residues S34, S300, and S525 each carry the phosphoserine modification.

Belongs to the STXBP/unc-18/SEC1 family. In terms of assembly, interacts with STX17. Interacts with STX5A. Interacts with the COG complex via COG4.

Its subcellular location is the cytoplasm. It is found in the endoplasmic reticulum membrane. It localises to the golgi apparatus. The protein localises to the golgi stack membrane. Functionally, plays a role in SNARE-pin assembly and Golgi-to-ER retrograde transport via its interaction with COG4. Involved in vesicular transport between the endoplasmic reticulum and the Golgi. The polypeptide is Sec1 family domain-containing protein 1 (Scfd1) (Mus musculus (Mouse)).